The sequence spans 288 residues: Histone H3-like centromeric protein hcp-3 (288 aa).

Residues Y96 to G194 form a disordered region. The span at M178–P193 shows a compositional bias: basic residues. An H3-like region spans residues Y191 to L288.

The protein belongs to the histone H3 family. In terms of assembly, forms a nucleosome-like histone octamer containing two molecules each of H2A, H2B, hcp-3 and H4 assembled in one hcp-3-H4 heterotetramer and two H2A-H2B heterodimers. The hcp-3-H4 heterotetramer is more compact and structurally more rigid than corresponding H3-H4 heterotetramers. Interacts with knl-2. Interacts with lin-53.

The protein resides in the nucleus. It localises to the chromosome. The protein localises to the centromere. It is found in the kinetochore. In terms of biological role, histone H3-like variant which exclusively replaces conventional H3 in the nucleosome core of centromeric chromatin at the inner plate of the kinetochore. Required for recruitment and assembly of kinetochore proteins, mitotic progression and chromosome segregation. May serve as an epigenetic mark that propagates centromere identity through replication and cell division. Might promote cleavage furrow stability during cytokinesis. Not required for chromosome segregation during meiosis. The polypeptide is Histone H3-like centromeric protein hcp-3 (Caenorhabditis elegans).